The chain runs to 1469 residues: snRNA-activating protein complex subunit 4 (1469 aa).

The disordered stretch occupies residues 16–82; that stretch reads ELERILDPGS…DPKDKTLPED (67 aa). Residues 24-36 are compositionally biased toward low complexity; it reads GSSGSHVEISESS. Residues 37–53 show a composition bias toward acidic residues; that stretch reads LESDSEADSLPSEDLDP. Ser68 carries the post-translational modification Phosphoserine. Residues 84–133 are SNAPC5-binding; that stretch reads ETCLQLNMVYQEVIQEKLAEANLLLAQNREQQEELMRDLAGSKGTKVKDG. Residues 250 to 288 enclose the Myb-like 1 domain; the sequence is EEALLGNRLDSHDWEKISNINFEGSRSAEEIRKFWQNSE. The HTH myb-type 1 domain maps to 289–343; sequence HPSINKQEWSREEEERLQAIAAAHGHLEWQKIAEELGTSRSAFQCLQKFQQHNKA. Positions 317-341 form a DNA-binding region, H-T-H motif; sequence WQKIAEELGTSRSAFQCLQKFQQHN. One can recognise a Myb-like 2 domain in the interval 344-395; sequence LKRKEWTEEEDRMLTQLVQEMRVGSHIPYRRIVYYMEGRDSMQLIYRWTKSL. 2 consecutive HTH myb-type domains span residues 396–451 and 452–503; these read DPGL…HFSL and KKGR…GKKQ. 2 consecutive DNA-binding regions (H-T-H motif) follow at residues 424–447 and 476–499; these read WFKIREEVPGRSDAQCRDRYLRRL and WAKIASELPHRSGSQCLSKWKIMM. Disordered regions lie at residues 501–558, 577–661, 685–710, 834–894, 932–981, 1001–1051, 1121–1167, and 1184–1266; these read KKQG…GDRA, QSTS…QALE, RSCTQKEQLRQPPLPTSSPGVSSGDS, ASSS…KTVS, PLPH…DKRL, PAAS…PSPT, AAQG…PAEA, and IPEP…GPEK. The segment covering 503–516 has biased composition (basic residues); that stretch reads QGLRRRRRRARHSV. The span at 519 to 541 shows a compositional bias: low complexity; the sequence is SSTSSSGSSSGSSGGSSSSSSSS. Ser599 is subject to Phosphoserine. Over residues 602–618 the composition is skewed to polar residues; it reads KGSSASQGGSKEASTTA. The residue at position 626 (Ser626) is a Phosphoserine. A compositionally biased stretch (pro residues) spans 932-944; the sequence is PLPHTPHGRPAPG. A compositionally biased stretch (low complexity) spans 951 to 968; that stretch reads PLSGPGAPAAAKPGTSGS. A compositionally biased stretch (polar residues) spans 1014–1029; the sequence is ISVSCPESGLGQSQAP. A compositionally biased stretch (pro residues) spans 1039–1051; it reads EAPPFLPAAPSPT. Thr1157 bears the Phosphothreonine mark. Residues 1184–1195 show a composition bias toward basic and acidic residues; it reads IPEPRTSSHADP. Residue Ser1224 is modified to Phosphoserine. Positions 1281-1393 are SNAPC2-binding; the sequence is ATQQWLGGQR…QGVRTTLSVP (113 aa). A phosphoserine mark is found at Ser1398, Ser1400, and Ser1440. Residues 1430-1449 form a disordered region; it reads APDSGKCSASSCLDTSNDPD. Polar residues predominate over residues 1436 to 1445; it reads CSASSCLDTS.

Part of the SNAPc complex composed of 5 subunits: SNAPC1, SNAPC2, SNAPC3, SNAPC4 and SNAPC5. SNAPC4 interacts with SNAPC1, SNAPC2, SNAPC5, BRF2 and TBP.

It localises to the nucleus. Functionally, part of the SNAPc complex required for the transcription of both RNA polymerase II and III small-nuclear RNA genes. Binds to the proximal sequence element (PSE), a non-TATA-box basal promoter element common to these 2 types of genes. Recruits TBP and BRF2 to the U6 snRNA TATA box. The sequence is that of snRNA-activating protein complex subunit 4 from Homo sapiens (Human).